The sequence spans 346 residues: Peroxidase 9 (346 aa).

The first 23 residues, 1-23 (MAISKLIPTLVLFVLFSFDVSVA), serve as a signal peptide directing secretion. 4 cysteine pairs are disulfide-bonded: cysteine 54–cysteine 134, cysteine 87–cysteine 92, cysteine 140–cysteine 342, and cysteine 219–cysteine 251. The active-site Proton acceptor is the histidine 85. Residues aspartate 86, valine 89, glycine 91, aspartate 93, and serine 95 each contribute to the Ca(2+) site. Position 182 (proline 182) interacts with substrate. An N-linked (GlcNAc...) asparagine glycan is attached at asparagine 185. Heme b is bound at residue histidine 212. Threonine 213 lines the Ca(2+) pocket. Ca(2+) contacts are provided by aspartate 264, serine 267, and aspartate 272.

The protein belongs to the peroxidase family. Classical plant (class III) peroxidase subfamily. Requires heme b as cofactor. Ca(2+) is required as a cofactor.

It is found in the secreted. The enzyme catalyses 2 a phenolic donor + H2O2 = 2 a phenolic radical donor + 2 H2O. Removal of H(2)O(2), oxidation of toxic reductants, biosynthesis and degradation of lignin, suberization, auxin catabolism, response to environmental stresses such as wounding, pathogen attack and oxidative stress. These functions might be dependent on each isozyme/isoform in each plant tissue. In Arabidopsis thaliana (Mouse-ear cress), this protein is Peroxidase 9 (PER9).